Consider the following 175-residue polypeptide: Protein FMP23, mitochondrial (175 aa).

The transit peptide at 1–38 directs the protein to the mitochondrion; that stretch reads MLINHLSKIRTVRHFSNIKPVLSKEVSRRVIVAPASHF.

Its subcellular location is the mitochondrion. In terms of biological role, may be involved in mitochondrial iron or copper homeostatis. The protein is Protein FMP23, mitochondrial (FMP23) of Saccharomyces cerevisiae (strain ATCC 204508 / S288c) (Baker's yeast).